The chain runs to 214 residues: Late embryogenesis abundant protein At1g64065 (214 aa).

The helical transmembrane segment at 41 to 61 (VYSLTIIVIIFALCLILSSIF) threads the bilayer.

It belongs to the LEA type 2 family.

The protein resides in the membrane. The polypeptide is Late embryogenesis abundant protein At1g64065 (Arabidopsis thaliana (Mouse-ear cress)).